The sequence spans 357 residues: Protein Wnt-9b (357 aa).

A signal peptide spans 1–22 (MRPPPALALAGLCLLALPAAAA). 11 disulfide bridges follow: Cys89–Cys100, Cys135–Cys143, Cys145–Cys162, Cys210–Cys224, Cys212–Cys219, Cys291–Cys316, Cys305–Cys311, Cys315–Cys355, Cys331–Cys346, Cys333–Cys343, and Cys338–Cys339. N-linked (GlcNAc...) asparagine glycosylation occurs at Asn99. Ser216 carries the O-palmitoleoyl serine; by PORCN lipid modification.

The protein belongs to the Wnt family. As to quaternary structure, forms a soluble 1:1 complex with AFM; this prevents oligomerization and is required for prolonged biological activity. The complex with AFM may represent the physiological form in body fluids. Component of the Wnt-Fzd-LRP5-LRP6 signaling complex that contains a WNT protein, a FZD protein and LRP5 or LRP6. Interacts directly in the complex with LRP6. Interacts with PKD1 (via extracellular domain). In terms of processing, palmitoleoylation is required for efficient binding to frizzled receptors. Depalmitoleoylation leads to Wnt signaling pathway inhibition. As to expression, moderately expressed in fetal kidney and adult kidney. Also found in brain.

The protein localises to the secreted. The protein resides in the extracellular space. It localises to the extracellular matrix. Ligand for members of the frizzled family of seven transmembrane receptors. Functions in the canonical Wnt/beta-catenin signaling pathway. Required for normal embryonic kidney development, and for normal development of the urogenital tract, including uterus and part of the oviduct and the upper vagina in females, and epididymis and vas deferens in males. Activates a signaling cascade in the metanephric mesenchyme that induces tubulogenesis. Acts upstream of WNT4 in the signaling pathways that mediate development of kidney tubules and the Muellerian ducts. Plays a role in cranofacial development and is required for normal fusion of the palate during embryonic development. The sequence is that of Protein Wnt-9b (WNT9B) from Homo sapiens (Human).